Reading from the N-terminus, the 2726-residue chain is Filamin-C (2726 aa).

The actin-binding stretch occupies residues 1–260 (MMNNSNYSDA…VMTYLSQFPK (260 aa)). Ser-5 carries the phosphoserine modification. 2 Calponin-homology (CH) domains span residues 37–143 (KIQQ…LHYS) and 160–263 (QTPK…KAKL). 15 Filamin repeats span residues 271–369 (SKQL…EVNV), 371–469 (MALG…PVHV), 470–566 (AEAC…EVQV), 567–659 (SPEA…IAHI), 663–759 (PPDC…RVNV), 760–862 (GEGS…HIKV), 863–961 (DPSH…VVNV), 962–1057 (APPL…AVEG), 1058–1150 (VLPP…KATI), 1151–1245 (QPVF…RVHV), 1246–1345 (QPAV…RVGV), 1346–1438 (TEGC…RVPV), 1439–1534 (KDVV…KIKV), 1535–1631 (LPAH…RIHA), and 1636–1735 (DASK…HVLA). Arg-1003 is modified (omega-N-methylarginine). Phosphoserine is present on residues Ser-1162 and Ser-1339. Positions 1736–1759 (CDPLPHVEEPAEVLQLHQPYAPLR) are hinge 1. Filamin repeat units follow at residues 1760 to 1854 (PGTC…LQFY), 1855 to 1947 (VDAI…TAKI), 1948 to 2034 (TGDD…KILV), and 2037 to 2129 (SEIG…TVKV). Ser-2043 is modified (phosphoserine). Positions 2163–2244 (GNWFQMVSAQ…FGSITRQQEG (82 aa)) are intradomain insert; mediate targeting to Z lines. The segment covering 2194–2210 (ISKTRGGETKREVRVEE) has biased composition (basic and acidic residues). Positions 2194 to 2214 (ISKTRGGETKREVRVEESTQV) are disordered. Ser-2234 and Ser-2237 each carry phosphoserine. Thr-2239 bears the Phosphothreonine mark. The segment covering 2241–2260 (QQEGEASSQDMTAQVTSPSG) has biased composition (polar residues). The interval 2241–2261 (QQEGEASSQDMTAQVTSPSGK) is disordered. One copy of the Filamin 20; mediates interaction with XIRP1 repeat lies at 2245–2307 (EASSQDMTAQ…VPGSPFQFTV (63 aa)). Filamin repeat units lie at residues 2310–2402 (LGEG…VVPV), 2404–2497 (SLSD…KIRV), and 2501–2593 (SQAG…KAKV). The segment at 2404–2725 (SLSDDARRLT…VPGSPFKVNV (322 aa)) is interaction with INPPL1. Phosphoserine occurs at positions 2587, 2618, 2621, 2633, 2715, and 2719. The tract at residues 2594–2630 (TGPRLSGGHSLHETSTVLVETVTKSSSSRGASYSSIP) is hinge 2. The self-association site, tail stretch occupies residues 2594 to 2726 (TGPRLSGGHS…PGSPFKVNVP (133 aa)). Residues 2631–2725 (KFSSDASKVV…VPGSPFKVNV (95 aa)) form a Filamin 24 repeat.

It belongs to the filamin family. As to quaternary structure, homodimer; the filamin repeat 24 and the second hinge domain are important for dimer formation. Interacts with FLNB, KCND2, INPPL1, ITGB1A, MYOT, MYOZ1 and MYOZ3. Interacts with sarcoglycans SGCD and SGCG. Interacts (via filament repeats 17-18, 20-21 and 24) with USP25 (isoform USP25m only). Interacts with FBLIM1. Interacts with KY. Interacts with IGFN1. Interacts with MICALL2. Interacts with XIRP1; this interaction is mediated by filamin 20 repeat. Interacts with ANK3. Interacts with SYNPO2. In terms of processing, ubiquitinated by FBXL22, leading to proteasomal degradation.

It localises to the cytoplasm. It is found in the membrane. Its subcellular location is the cytoskeleton. The protein resides in the myofibril. The protein localises to the sarcomere. It localises to the z line. Muscle-specific filamin, which plays a central role in sarcomere assembly and organization. Critical for normal myogenesis, it probably functions as a large actin-cross-linking protein with structural functions at the Z lines in muscle cells. May be involved in reorganizing the actin cytoskeleton in response to signaling events. The protein is Filamin-C (Flnc) of Rattus norvegicus (Rat).